A 381-amino-acid chain; its full sequence is Cyclic AMP-AMP-GMP synthase (381 aa).

Glutamine 51, serine 53, arginine 56, aspartate 69, aspartate 71, and arginine 109 together coordinate ATP. Catalysis depends on residues aspartate 69 and aspartate 71. 2 residues coordinate Mg(2+): aspartate 69 and aspartate 71. The active site involves aspartate 121. 2 residues coordinate Mg(2+): aspartate 121 and aspartate 196. Residues aspartate 196, arginine 197, arginine 204, threonine 205, glutamine 210, lysine 233, and tyrosine 250 each coordinate ATP. Residues asparagine 258 and leucine 260 each contribute to the Mg(2+) site. ATP is bound by residues valine 304 and arginine 307. Residues 348-381 (GSKFPLPGPQGGDRNGGFTTPSKPAEPQKTGRFA) form a disordered region.

It belongs to the CD-NTase family. D02 subfamily. In terms of assembly, monomer. Crystallizes as a Cap2 homodimer bound on each side by a CdnD monomer. The cofactor is Mg(2+). In bacteria expressing cap4-dncV-cap2-cap3, this protein is conjugated to a number of other proteins by Cap2, probably via this protein's C-terminal Ala residue. More conjugated DncV is found in the absence of Cap3.

The catalysed reaction is GTP + 2 ATP = 3',3',3'-cAAG + 3 diphosphate. Primed for activation by Cap2 which conjugates it to cellular proteins; activation is target protein-specific (green fluorescent protein does not activate the enzyme), but which protein(s) activate it is unclear. In terms of biological role, cyclic nucleotide synthase (second messenger synthase) of a CBASS antivirus system. CBASS (cyclic oligonucleotide-based antiphage signaling system) provides immunity against bacteriophages. The CD-NTase protein (CdnD, this protein) synthesizes cyclic nucleotides in response to infection; these serve as specific second messenger signals. The signals activate a diverse range of effectors, leading to bacterial cell death and thus abortive phage infection. A type II-C(AAG) CBASS system. Cyclic trinucleotide synthase that catalyzes the synthesis of 3',3',3'-cyclic AMP-AMP-GMP (cAAG) as the major product, a second messenger for cell signal transduction. Uses ATP as the first donor nucleotide, followed by GTP. Functionally, protects E.coli against phage T2 infection. When the cdnD-cap2-cap3-cap4 operon is introduced in E.coli there is a more than 10(3) decrease in the efficiency of T2 plaque formation. The operon does not protect against phage T5 and only about 10-fold against T7. Expression of cdnD-cap4 alone protects E.coli against phage T2 infection. This is Cyclic AMP-AMP-GMP synthase from Enterobacter hormaechei subsp. hoffmannii (strain UCI 50).